A 147-amino-acid chain; its full sequence is Hemoglobin subunit delta (147 aa).

The Globin domain maps to 3–147 (HLTPEEKTAV…VANALAHKYH (145 aa)). At Ser-51 the chain carries Phosphoserine. Positions 64 and 93 each coordinate heme b.

This sequence belongs to the globin family. As to quaternary structure, heterotetramer of two delta chains and two alpha chains. As to expression, red blood cells.

The sequence is that of Hemoglobin subunit delta (HBD) from Gorilla gorilla gorilla (Western lowland gorilla).